We begin with the raw amino-acid sequence, 437 residues long: uncharacterized protein (437 aa).

The helical transmembrane segment at 47 to 67 (LLIILIGFILLSSISAIQIDA) threads the bilayer.

The protein localises to the membrane. This is an uncharacterized protein from Methanocaldococcus jannaschii (strain ATCC 43067 / DSM 2661 / JAL-1 / JCM 10045 / NBRC 100440) (Methanococcus jannaschii).